Reading from the N-terminus, the 223-residue chain is Uracil-DNA glycosylase (223 aa).

Asp-61 serves as the catalytic Proton acceptor.

It belongs to the uracil-DNA glycosylase (UDG) superfamily. UNG family.

It localises to the cytoplasm. The catalysed reaction is Hydrolyzes single-stranded DNA or mismatched double-stranded DNA and polynucleotides, releasing free uracil.. Functionally, excises uracil residues from the DNA which can arise as a result of misincorporation of dUMP residues by DNA polymerase or due to deamination of cytosine. The chain is Uracil-DNA glycosylase from Haemophilus ducreyi (strain 35000HP / ATCC 700724).